Reading from the N-terminus, the 465-residue chain is MLKIYNSLTRQKEEFRPLEPRRVRMYVCGMTVYDYCHLGHARVMVVFDMVARYLRHLGLKVTYVRNVTDIDDKIIRRAVENGETIGALTARFIEAMHEDERALGVLPPDHEPRATESIDDILAMIGTLIERGHAYVGSNGDVFYAVASFPNYGRLSGKNLDELRAGERIEVDEAKRDPLDFVLWKSAKPGEPFWASPWGPGRPGWHIECSAMSTRCLGAHFDIHGGGMDLQFPHHENEIAQSEGATGEHFVNYWMHNGFVRINEEKMSKSLGNFFTVREILARYRPEVVRFFILNSHYRSPLNYSDENLDEAAAALSRLYTALRGLAPDLPLPLGEDRDEGFSSRFADAMQDDFNTPEAIAVLFDLAREINRHKAAEPAKAAALGATLKSLGNVLGLLQTDPEAYFKSDAGGSGLSDADIETRIRARLEARKAKNWAESDRIRDELKAQGIILEDSAAGTTWRRE.

Residue Cys-28 coordinates Zn(2+). The short motif at 30–40 (MTVYDYCHLGH) is the 'HIGH' region element. Zn(2+) contacts are provided by Cys-209, His-234, and Glu-238. Positions 266–270 (KMSKS) match the 'KMSKS' region motif. Lys-269 is an ATP binding site.

This sequence belongs to the class-I aminoacyl-tRNA synthetase family. In terms of assembly, monomer. The cofactor is Zn(2+).

It is found in the cytoplasm. It carries out the reaction tRNA(Cys) + L-cysteine + ATP = L-cysteinyl-tRNA(Cys) + AMP + diphosphate. This is Cysteine--tRNA ligase from Methylococcus capsulatus (strain ATCC 33009 / NCIMB 11132 / Bath).